We begin with the raw amino-acid sequence, 542 residues long: Anaerobic glycerol-3-phosphate dehydrogenase subunit A (542 aa).

10-38 (DVIIIGGGATGAGIARDCALRGLRVILVE) serves as a coordination point for FAD.

This sequence belongs to the FAD-dependent glycerol-3-phosphate dehydrogenase family. In terms of assembly, composed of a catalytic GlpA/B dimer and of membrane bound GlpC. FAD is required as a cofactor. It depends on FMN as a cofactor.

It localises to the cell inner membrane. The catalysed reaction is a quinone + sn-glycerol 3-phosphate = dihydroxyacetone phosphate + a quinol. It participates in polyol metabolism; glycerol degradation via glycerol kinase pathway; glycerone phosphate from sn-glycerol 3-phosphate (anaerobic route): step 1/1. Functionally, conversion of glycerol 3-phosphate to dihydroxyacetone. Uses fumarate or nitrate as electron acceptor. The chain is Anaerobic glycerol-3-phosphate dehydrogenase subunit A (glpA) from Escherichia coli O157:H7.